The following is a 104-amino-acid chain: Large ribosomal subunit protein bL21 (104 aa).

It belongs to the bacterial ribosomal protein bL21 family. In terms of assembly, part of the 50S ribosomal subunit. Contacts protein L20.

Its function is as follows. This protein binds to 23S rRNA in the presence of protein L20. The protein is Large ribosomal subunit protein bL21 of Helicobacter hepaticus (strain ATCC 51449 / 3B1).